Reading from the N-terminus, the 95-residue chain is Probable FAD-linked sulfhydryl oxidase OPG072 (95 aa).

Topologically, residues 1–8 (MNPKHWGR) are intravirion. In terms of domain architecture, ERV/ALR sulfhydryl oxidase spans 1–95 (MNPKHWGRAV…AIDVTKVNPL (95 aa)). A helical transmembrane segment spans residues 9–25 (AVWTIIFIVLSQAGLDG). Over 26 to 95 (NIEACKRKLY…AIDVTKVNPL (70 aa)) the chain is Virion surface. A disulfide bridge links Cys-43 with Cys-46.

It belongs to the orthopoxvirus OPG072 family. As to quaternary structure, interacts with OPG128/A2.5; this interaction involves formation of a transient disulfide-bonded intermediate, allowing disulfide bond transfer. FAD serves as cofactor.

The protein resides in the virion membrane. Its subcellular location is the host cytoplasm. It catalyses the reaction 2 R'C(R)SH + O2 = R'C(R)S-S(R)CR' + H2O2. FAD-dependent sulfhydryl oxidase that catalyzes disulfide bond formation. The complete pathway for formation of disulfide bonds in intracellular virion membrane proteins sequentially involves thiol-disulfide transfer between OPG072/E10, OPG128/A2.5 and OPG088/G4. The polypeptide is Probable FAD-linked sulfhydryl oxidase OPG072 (OPG072) (Bos taurus (Bovine)).